Reading from the N-terminus, the 286-residue chain is NADP-dependent dehydrogenase clz5 (286 aa).

Residues Ser-49, Leu-51, Asp-93, Tyr-207, Lys-211, Ile-241, and Gln-245 each contribute to the NADP(+) site. The Proton acceptor role is filled by Tyr-207. The active-site Proton donor is Tyr-207. The active-site Lowers pKa of active site Tyr is the Lys-211.

The protein belongs to the short-chain dehydrogenases/reductases (SDR) family. In terms of assembly, homodimer.

It is found in the cytoplasm. Its subcellular location is the cytosol. It functions in the pathway secondary metabolite biosynthesis. Its function is as follows. NADP-dependent dehydrogenase; part of the gene cluster that mediates the biosynthesis of squalestatin S1 (SQS1, also known as zaragozic acid A), a heavily oxidized fungal polyketide that offers potent cholesterol lowering activity by targeting squalene synthase (SS). SQS1 is composed of a 2,8-dioxobicyclic[3.2.1]octane-3,4,5-tricarboxyclic acid core that is connected to two lipophilic polyketide arms. These initial steps feature the priming of an unusual benzoic acid starter unit onto the highly reducing polyketide synthase clz14, followed by oxaloacetate extension and product release to generate a tricarboxylic acid containing product. The phenylalanine ammonia lyase (PAL) clz10 and the acyl-CoA ligase clz12 are involved in transforming phenylalanine into benzoyl-CoA. The citrate synthase-like protein clz17 is involved in connecting the C-alpha-carbons of the hexaketide chain and oxaloacetate to afford the tricarboxylic acid unit. The potential hydrolytic enzymes, clz11 and clz13, are in close proximity to pks2 and may participate in product release. On the other side, the tetraketide arm is synthesized by a the squalestatin tetraketide synthase clz2 and enzymatically esterified to the core in the last biosynthetic step, by the acetyltransferase clz6. The biosynthesis of the tetraketide must involve 3 rounds of chain extension. After the first and second rounds methyl-transfer occurs, and in all rounds of extension the ketoreductase and dehydratase are active. The enoyl reductase and C-MeT of clz2 are not active in the final round of extension. The acetyltransferase clz6 appears to have a broad substrate selectivity for its acyl CoA substrate, allowing the in vitro synthesis of novel squalestatins. The biosynthesis of SQS1 requires several oxidative steps likely performed by oxidoreductases clz3, clz15 and clz16. Finally, in support of the identification of the cluster as being responsible for SQS1 production, the cluster contains a gene encoding a putative squalene synthase (SS) clz20, suggesting a likely mechanism for self-resistance. The sequence is that of NADP-dependent dehydrogenase clz5 from Cochliobolus lunatus (Filamentous fungus).